We begin with the raw amino-acid sequence, 222 residues long: Myosin regulatory light chain 2 (222 aa).

The tract at residues 1-65 (MADEKKKVKK…RGSRKSKRAG (65 aa)) is disordered. Ala2 carries the N-acetylalanine modification. The segment covering 19–53 (TSETASEAASEAATPAPAATPAPAASATGSKRASG) has biased composition (low complexity). Residues Ser66 and Ser67 each carry the phosphoserine modification. EF-hand domains follow at residues 75-110 (KQIAEFKEAFQLMDADKDGIIGKNDLRAAFDSVGKI), 147-180 (DEDEVVIAAFKTFDNDGLIDGDKFREMLMNFGDK), and 181-216 (FTMKEVDDAYDQMVIDDKNQIDTAALIEMLTGKGEE). 4 residues coordinate Ca(2+): Asp88, Asp90, Asp92, and Asp99.

In terms of assembly, myosin is a hexamer of 2 heavy chains and 4 light chains.

The sequence is that of Myosin regulatory light chain 2 (Mlc2) from Drosophila melanogaster (Fruit fly).